A 249-amino-acid chain; its full sequence is Tetraspanin-7 (249 aa).

Topologically, residues 1–16 (MASRRMETKPVITCLK) are cytoplasmic. The helical transmembrane segment at 17–40 (TLLIIYSFVFWITGVILLAVGVWG) threads the bilayer. Over 41–56 (KLTLGTYISLIAENST) the chain is Extracellular. N54 carries N-linked (GlcNAc...) asparagine glycosylation. The helical transmembrane segment at 57–75 (NAPYVLIGTGTTIVVFGLF) threads the bilayer. At 76–86 (GCFATCRGSPW) the chain is on the cytoplasmic side. The chain crosses the membrane as a helical span at residues 87–112 (MLKLYAMFLSLVFLAELVAGISGFVF). Residues 113–213 (RHEIKDTFLR…LVTSFMETNM (101 aa)) lie on the Extracellular side of the membrane. N155, N158, N177, and N188 each carry an N-linked (GlcNAc...) asparagine glycan. Residues 214 to 234 (GIIAGVAFGIAFSQLIGMLLA) traverse the membrane as a helical segment. Residues 235-249 (CCLSRFITANQYEMV) lie on the Cytoplasmic side of the membrane.

It belongs to the tetraspanin (TM4SF) family.

Its subcellular location is the membrane. May be involved in cell proliferation and cell motility. In Mus musculus (Mouse), this protein is Tetraspanin-7 (Tspan7).